We begin with the raw amino-acid sequence, 213 residues long: Carboxysome shell protein CcmP (213 aa).

BMC circularly permuted domains are found at residues 4-106 (ELRS…RLKP) and 107-211 (KIVS…GDRS). Positions 69–70 (ER) match the Probably important for pore gating motif.

The protein belongs to the EutL/PduB family. A dimer of stacked trimers, the same faces interact.

The protein resides in the carboxysome. Functionally, probably part of the carboxysome shell, a polyhedral inclusion where RuBisCO (ribulose bisphosphate carboxylase, rbcL-rbcS) is sequestered. It is thought that this protein controls transport of RuBisCO reactants in and out of the carboxysome; residual densities in the 4 X-ray structures suggest that differing compounds bind in interior pockets, depending on the open or closed state of the pore. The sequence is that of Carboxysome shell protein CcmP from Synechococcus elongatus (strain ATCC 33912 / PCC 7942 / FACHB-805) (Anacystis nidulans R2).